The sequence spans 220 residues: ATP phosphoribosyltransferase (220 aa).

It belongs to the ATP phosphoribosyltransferase family. Short subfamily. In terms of assembly, heteromultimer composed of HisG and HisZ subunits.

The protein resides in the cytoplasm. The catalysed reaction is 1-(5-phospho-beta-D-ribosyl)-ATP + diphosphate = 5-phospho-alpha-D-ribose 1-diphosphate + ATP. It functions in the pathway amino-acid biosynthesis; L-histidine biosynthesis; L-histidine from 5-phospho-alpha-D-ribose 1-diphosphate: step 1/9. Functionally, catalyzes the condensation of ATP and 5-phosphoribose 1-diphosphate to form N'-(5'-phosphoribosyl)-ATP (PR-ATP). Has a crucial role in the pathway because the rate of histidine biosynthesis seems to be controlled primarily by regulation of HisG enzymatic activity. The sequence is that of ATP phosphoribosyltransferase from Janthinobacterium sp. (strain Marseille) (Minibacterium massiliensis).